The chain runs to 492 residues: 3-ketoacyl-CoA synthase 5 (492 aa).

A run of 2 helical transmembrane segments spans residues 20-40 and 59-79; these read LINNFLTLLLIPVIATVAIEL and LLHILCSSFLIIFVSTVYFMS. The FAE domain occupies 76 to 365; sequence YFMSKPRTVY…FLSSLIGRKI (290 aa). Catalysis depends on residues Cys-220, His-299, His-383, His-387, His-416, and Asn-420.

This sequence belongs to the thiolase-like superfamily. Chalcone/stilbene synthases family. In terms of tissue distribution, expressed in siliques, flowers, leaves and seedlings.

Its subcellular location is the membrane. The catalysed reaction is a very-long-chain acyl-CoA + malonyl-CoA + H(+) = a very-long-chain 3-oxoacyl-CoA + CO2 + CoA. It functions in the pathway lipid metabolism; fatty acid biosynthesis. With respect to regulation, inhibited by K3 herbicides such as alachlor, allidochlor, anilofos, cafenstrole and flufenacet. Strongly inhibited by metazachlor and mefluidide. Its function is as follows. Mediates mostly the synthesis of VLCFAs from 26 to 30 carbons in length (e.g. C20:1, C26, C28, C30). The chain is 3-ketoacyl-CoA synthase 5 from Arabidopsis thaliana (Mouse-ear cress).